We begin with the raw amino-acid sequence, 451 residues long: UPF0210 protein APL_1491 (451 aa).

Belongs to the UPF0210 family. Homodimer.

The chain is UPF0210 protein APL_1491 from Actinobacillus pleuropneumoniae serotype 5b (strain L20).